The following is a 195-amino-acid chain: Neurturin (195 aa).

Positions 1–19 (MRRWKAAALVSLICSSLLS) are cleaved as a signal peptide. Residues 20–95 (VWMCQEGLLL…RAGPRRRRAR (76 aa)) constitute a propeptide that is removed on maturation. Disulfide bonds link Cys101–Cys163, Cys128–Cys192, and Cys132–Cys194. The heparan sulfate group site is built by Arg147, Arg156, and Arg158.

This sequence belongs to the TGF-beta family. GDNF subfamily. As to quaternary structure, homodimer; disulfide-linked. Interacts with GFRA2 coreceptor and RET: forms a 2:2:2 ternary complex composed of NRTN ligand, GFRA2 and RET receptor. Also forms a 4:4:4 tetrameric complex composed of 4 copies of NRTN ligand, GFRA2 and RET receptor, which prevents endocytosis of RET. In terms of tissue distribution, widespread distribution.

The protein localises to the secreted. In terms of biological role, growth factor that supports the survival of sympathetic neurons in culture. May regulate the development and maintenance of the CNS. Involved in the development of the neural crest. Might control the size of non-neuronal cell population such as haemopoietic cells. Acts by binding to its coreceptor, GFRA2, leading to autophosphorylation and activation of the RET receptor. Heparan sulfate-binding is required for signaling. The sequence is that of Neurturin (Nrtn) from Mus musculus (Mouse).